Reading from the N-terminus, the 363-residue chain is Pyrimidine monooxygenase RutA (363 aa).

FMN contacts are provided by residues 49–50 (IK), Asn-115, Glu-124, 140–141 (RY), and Ser-190.

The protein belongs to the NtaA/SnaA/DszA monooxygenase family. RutA subfamily.

It carries out the reaction uracil + FMNH2 + NADH + O2 = (Z)-3-ureidoacrylate + FMN + NAD(+) + H2O + H(+). The catalysed reaction is thymine + FMNH2 + NADH + O2 = (Z)-2-methylureidoacrylate + FMN + NAD(+) + H2O + H(+). Its function is as follows. Catalyzes the pyrimidine ring opening between N-3 and C-4 by an unusual flavin hydroperoxide-catalyzed mechanism, adding oxygen atoms in the process to yield ureidoacrylate peracid, that immediately reacts with FMN forming ureidoacrylate and FMN-N(5)-oxide. The FMN-N(5)-oxide reacts spontaneously with NADH to produce FMN. Requires the flavin reductase RutF to regenerate FMN in vivo. The protein is Pyrimidine monooxygenase RutA of Klebsiella pneumoniae subsp. pneumoniae (strain ATCC 700721 / MGH 78578).